The primary structure comprises 296 residues: Mycothiol acetyltransferase (296 aa).

N-acetyltransferase domains lie at 17 to 146 and 156 to 296; these read YNHR…AVYD and LKTA…VYEK. Glu44 lines the 1D-myo-inositol 2-(L-cysteinylamino)-2-deoxy-alpha-D-glucopyranoside pocket. 81–83 serves as a coordination point for acetyl-CoA; sequence LAV. 1D-myo-inositol 2-(L-cysteinylamino)-2-deoxy-alpha-D-glucopyranoside-binding residues include Glu183, Lys222, and Glu230. Acetyl-CoA-binding positions include 234 to 236 and 241 to 247; these read VGL and RGKGLGD. Position 268 (Tyr268) interacts with 1D-myo-inositol 2-(L-cysteinylamino)-2-deoxy-alpha-D-glucopyranoside.

The protein belongs to the acetyltransferase family. MshD subfamily. As to quaternary structure, monomer.

The catalysed reaction is 1D-myo-inositol 2-(L-cysteinylamino)-2-deoxy-alpha-D-glucopyranoside + acetyl-CoA = mycothiol + CoA + H(+). In terms of biological role, catalyzes the transfer of acetyl from acetyl-CoA to desacetylmycothiol (Cys-GlcN-Ins) to form mycothiol. This Corynebacterium efficiens (strain DSM 44549 / YS-314 / AJ 12310 / JCM 11189 / NBRC 100395) protein is Mycothiol acetyltransferase.